Here is a 533-residue protein sequence, read N- to C-terminus: Non-specific phospholipase C1 (533 aa).

An N-terminal signal peptide occupies residues 1 to 22; that stretch reads MAFRRVLTTVILFCYLLISSQS.

Belongs to the bacterial phospholipase C family. Expressed in roots, leaves, stems, flowers and siliques.

The protein resides in the secreted. The chain is Non-specific phospholipase C1 (NPC1) from Arabidopsis thaliana (Mouse-ear cress).